Here is a 92-residue protein sequence, read N- to C-terminus: Small ribosomal subunit protein uS19 (92 aa).

Belongs to the universal ribosomal protein uS19 family.

Functionally, protein S19 forms a complex with S13 that binds strongly to the 16S ribosomal RNA. This chain is Small ribosomal subunit protein uS19, found in Rhodospirillum centenum (strain ATCC 51521 / SW).